Consider the following 250-residue polypeptide: Small ribosomal subunit protein uS2 (250 aa).

It belongs to the universal ribosomal protein uS2 family.

The protein is Small ribosomal subunit protein uS2 of Albidiferax ferrireducens (strain ATCC BAA-621 / DSM 15236 / T118) (Rhodoferax ferrireducens).